Reading from the N-terminus, the 502-residue chain is MTQVPPVTFQQYGPVITTSAGNPVDDNQNSVTAGPYGPAILSNFHLIDKLAHFDRERIPERVVHAKGGGAFGYFEVTHDITRFCKAKLFEKIGKRTPVFARFSTVAGESGSADTRRDPRGFALKFYTEEGNWDMVGNNTPIFFVRDAIKFPDFIHTQKRHPQTHLHDPNMVWDFFSLVPESVHQVTFLYTDRGTPDGFRHMNGYGSHTFKFINKDNEAFYVKWHFKTNQGIKNLNRQRAKELESEDPDYAVRDLFNAIAKREFPSWTFCIQVMPLKDAETYKWNVFDVTKVWPHGDYPLIPVGKLVLDRNPENYFQDVEQAAFAPAHMVPGIEPSEDRMLQGRMFSYIDTHRHRLGANYHQIPVNRPWNARGGDYSVRDGPMCVDGNKGSQLNYEPNSVDGFPKEDRNAAVSGTTTVSGTVACHPQEHPNSDFEQPGNFYRTVLSEPEREALIGNIAEHLRQARRDIQERQVKIFYKCDPEYGERVARAIGLPTAACYPAKM.

Active-site residues include histidine 64 and asparagine 137. Tyrosine 347 lines the heme pocket. Positions 500–502 match the Microbody targeting signal motif; it reads AKM.

This sequence belongs to the catalase family. Requires heme as cofactor.

Its subcellular location is the peroxisome matrix. It catalyses the reaction 2 H2O2 = O2 + 2 H2O. Functionally, catalyzes the degradation of hydrogen peroxide (H(2)O(2)) generated by peroxisomal oxidases to water and oxygen, thereby protecting cells from the toxic effects of hydrogen peroxide. This chain is Peroxisomal catalase, found in Toxoplasma gondii.